We begin with the raw amino-acid sequence, 349 residues long: tRNA pseudouridine synthase D (349 aa).

Phe-26 contacts substrate. Asp-79 acts as the Nucleophile in catalysis. Asn-128 lines the substrate pocket. Positions Gly-154 to Val-302 constitute a TRUD domain. Phe-328 serves as a coordination point for substrate.

Belongs to the pseudouridine synthase TruD family.

The enzyme catalyses uridine(13) in tRNA = pseudouridine(13) in tRNA. In terms of biological role, responsible for synthesis of pseudouridine from uracil-13 in transfer RNAs. This chain is tRNA pseudouridine synthase D, found in Photorhabdus laumondii subsp. laumondii (strain DSM 15139 / CIP 105565 / TT01) (Photorhabdus luminescens subsp. laumondii).